We begin with the raw amino-acid sequence, 87 residues long: Phytosulfokines 1 (87 aa).

An N-terminal signal peptide occupies residues 1 to 24; the sequence is MMKTKSEVLIFFFTLVLLLSMASS. A propeptide spanning residues 25-76 is cleaved from the precursor; the sequence is VILREDGFAPPKPSPTTHEKASTKGDRDGVECKNSDSEEECLVKKTVAAHTD. The segment at 31–59 is disordered; the sequence is GFAPPKPSPTTHEKASTKGDRDGVECKNS. The segment covering 41-59 has biased composition (basic and acidic residues); that stretch reads THEKASTKGDRDGVECKNS. Sulfotyrosine occurs at positions 77 and 79. A propeptide spanning residues 82–87 is cleaved from the precursor; the sequence is DLNLSP.

This sequence belongs to the phytosulfokine family. Post-translationally, sulfation is important for activity and for the binding to a putative membrane receptor. PSK-beta is produced from PSK-alpha by exopeptidase digestion. As to expression, expressed only in roots.

It localises to the secreted. Its function is as follows. Promotes plant cell differentiation, organogenesis and somatic embryogenesis as well as cell proliferation. This Arabidopsis thaliana (Mouse-ear cress) protein is Phytosulfokines 1 (PSK1).